The chain runs to 282 residues: Pseudokinase OPG198 (282 aa).

ATP-binding residues include M1 and K30. A Protein kinase domain is found at 1–282; it reads MESFKYCFDN…DRLRRLFIQD (282 aa).

This sequence belongs to the protein kinase superfamily. Ser/Thr protein kinase family. Poxviruses subfamily. Interacts with B1/VPK1. Interacts with host VRK1. Interacts with host VRK2.

The protein localises to the host nucleus. With respect to regulation, both catalytically active kinases B1/VPK1 and host VRK2 repress B12 inhibitory activity in a B1/VPK1 deletion mutant strain. Pseudokinase that plays a role in viral DNA replication repression by activating the antiviral protein BANF1 and inhibiting the activity of host VRK1, a cellular modulator of BANF1. The polypeptide is Pseudokinase OPG198 (OPG198) (Cynomys gunnisoni (Gunnison's prairie dog)).